A 1804-amino-acid chain; its full sequence is Obscurin-like protein 1 (1804 aa).

S10 carries the phosphoserine modification. 4 Ig-like domains span residues 12–100 (PCFL…AAVT), 128–225 (PKFL…ALLQ), 241–330 (PKPV…QTLS), and 339–425 (PRLR…ANVT). An interaction with TTN region spans residues 17–19 (FPR). C33 and C84 are oxidised to a cystine. The interaction with TTN stretch occupies residues 85-94 (RARNAAGEAY). C149 and C209 form a disulfide bridge. Residues 227 to 249 (HQPRESPPQDPDENPKPVLEPLK) are disordered. 2 disulfide bridges follow: C267–C319 and C362–C412. The Fibronectin type-III domain maps to 517–615 (PPGPPVMVEM…FNGSAHLVPT (99 aa)). Ig-like domains follow at residues 720–800 (PQDK…FGVT), 804–891 (PPVH…FTVT), 902–982 (PSSE…FTIT), 986–1075 (PPVR…VTVT), 1078–1165 (PERI…FNVS), 1176–1261 (PEAA…FNVQ), 1266–1442 (PPVK…ARLS), 1536–1621 (PVTI…ARLT), 1625–1694 (REVS…EDTG), and 1702–1798 (PAQS…ADTQ). 8 disulfide bridges follow: C738–C788, C829–C879, C920–C970, C1011–C1061, C1103–C1153, C1195–C1245, C1289–C1430, and C1558–C1608.

In terms of assembly, component of the 3M complex, composed of core components CUL7, CCDC8 and OBSL1. Interacts with CCDC8. Interacts with CUL7; the interaction is direct. Interacts with FBXW8. Interacts (via N-terminal Ig-like domain) with TTN/titin (via C-terminal Ig-like domain); the interaction is direct.

It localises to the cytoplasm. The protein localises to the perinuclear region. It is found in the golgi apparatus. Its function is as follows. Core component of the 3M complex, a complex required to regulate microtubule dynamics and genome integrity. It is unclear how the 3M complex regulates microtubules, it could act by controlling the level of a microtubule stabilizer. Acts as a regulator of the Cul7-RING(FBXW8) ubiquitin-protein ligase, playing a critical role in the ubiquitin ligase pathway that regulates Golgi morphogenesis and dendrite patterning in brain. Required to localize CUL7 to the Golgi apparatus in neurons. This is Obscurin-like protein 1 (Obsl1) from Mus musculus (Mouse).